Here is a 61-residue protein sequence, read N- to C-terminus: Metallothionein-2 (61 aa).

Met-1 is modified (N-acetylmethionine). Positions 1–29 (MDPNCSCATDGSCSCAGSCKCKECKCTTC) are beta. Residues Cys-5, Cys-7, Cys-13, Cys-15, Cys-19, Cys-21, Cys-24, Cys-26, Cys-29, Cys-33, Cys-34, Cys-36, Cys-37, Cys-41, Cys-44, Cys-48, Cys-50, and Cys-57 each contribute to the a divalent metal cation site. Residues 30 to 61 (KKSCCSCCPVGCAKCSQGCVCKEASDKCSCCA) are alpha. Ser-58 carries the post-translational modification Phosphoserine. A divalent metal cation is bound by residues Cys-59 and Cys-60.

It belongs to the metallothionein superfamily. Type 1 family.

Metallothioneins have a high content of cysteine residues that bind various heavy metals; these proteins are transcriptionally regulated by both heavy metals and glucocorticoids. The polypeptide is Metallothionein-2 (MT2) (Cricetulus griseus (Chinese hamster)).